Reading from the N-terminus, the 192-residue chain is Probable nicotinate-nucleotide adenylyltransferase (192 aa).

Belongs to the NadD family.

It carries out the reaction nicotinate beta-D-ribonucleotide + ATP + H(+) = deamido-NAD(+) + diphosphate. Its pathway is cofactor biosynthesis; NAD(+) biosynthesis; deamido-NAD(+) from nicotinate D-ribonucleotide: step 1/1. Catalyzes the reversible adenylation of nicotinate mononucleotide (NaMN) to nicotinic acid adenine dinucleotide (NaAD). The polypeptide is Probable nicotinate-nucleotide adenylyltransferase (Shouchella clausii (strain KSM-K16) (Alkalihalobacillus clausii)).